Here is a 341-residue protein sequence, read N- to C-terminus: L-threonine 3-dehydrogenase (341 aa).

Zn(2+) is bound at residue Cys38. Residues Thr40 and His43 each act as charge relay system in the active site. Zn(2+) is bound by residues His63, Glu64, Cys93, Cys96, Cys99, and Cys107. Residues Ile175, Asp195, Arg200, 262–264 (LGI), and 286–287 (IY) each bind NAD(+).

Belongs to the zinc-containing alcohol dehydrogenase family. In terms of assembly, homotetramer. Zn(2+) is required as a cofactor.

The protein resides in the cytoplasm. It catalyses the reaction L-threonine + NAD(+) = (2S)-2-amino-3-oxobutanoate + NADH + H(+). Its pathway is amino-acid degradation; L-threonine degradation via oxydo-reductase pathway; glycine from L-threonine: step 1/2. Functionally, catalyzes the NAD(+)-dependent oxidation of L-threonine to 2-amino-3-ketobutyrate. The polypeptide is L-threonine 3-dehydrogenase (Shewanella loihica (strain ATCC BAA-1088 / PV-4)).